The following is a 113-amino-acid chain: Small ribosomal subunit protein bS6 (113 aa).

Belongs to the bacterial ribosomal protein bS6 family.

Its function is as follows. Binds together with bS18 to 16S ribosomal RNA. The protein is Small ribosomal subunit protein bS6 of Wigglesworthia glossinidia brevipalpis.